A 403-amino-acid chain; its full sequence is Presqualene diphosphate synthase (403 aa).

Mg(2+) is bound by residues Asp84, Glu87, and Asp88.

The protein belongs to the phytoene/squalene synthase family. Requires Mg(2+) as cofactor.

It carries out the reaction 2 (2E,6E)-farnesyl diphosphate = presqualene diphosphate + diphosphate. Its function is as follows. Catalyzes the biosynthesis of presqualene diphosphate (PSPP). Works in combination with SSL-2 or SSL-3 to produce respectively squalene or botryococcene. In most other species, farnesyl diphosphate (FPP) is converted into squalene in a two-step reaction by a single enzyme. The sequence is that of Presqualene diphosphate synthase (SSL-1) from Botryococcus braunii (Green alga).